Consider the following 211-residue polypeptide: Heat shock 70 kDa protein 4L (211 aa).

Serine 161 carries the phosphoserine modification.

The protein belongs to the heat shock protein 70 family. In terms of assembly, homodimer.

The protein localises to the cytoplasm. The protein resides in the nucleus. Its function is as follows. Possesses chaperone activity in vitro where it inhibits aggregation of citrate synthase. The polypeptide is Heat shock 70 kDa protein 4L (Mesocricetus auratus (Golden hamster)).